The chain runs to 356 residues: Glutamine synthetase cytosolic isozyme 2 (356 aa).

The GS beta-grasp domain occupies 19–99 (IIAEYIWIGG…VMCDTYTPAG (81 aa)). The 251-residue stretch at 106–356 (KRHNAAKIFS…IAESTILWKP (251 aa)) folds into the GS catalytic domain.

It belongs to the glutamine synthetase family. As to quaternary structure, homooctamer.

Its subcellular location is the cytoplasm. The catalysed reaction is L-glutamate + NH4(+) + ATP = L-glutamine + ADP + phosphate + H(+). This chain is Glutamine synthetase cytosolic isozyme 2 (GS1-2), found in Vitis vinifera (Grape).